The primary structure comprises 340 residues: Ephrin-B3 (340 aa).

An N-terminal signal peptide occupies residues 1 to 27 (MGPPHSGPGGVRVGALLLLGVLGLVSG). Residues 28 to 167 (LSLEPVYWNS…TRGMKVLLRV (140 aa)) enclose the Ephrin RBD domain. Over 28–226 (LSLEPVYWNS…EGPLPPPSMP (199 aa)) the chain is Extracellular. Disulfide bonds link Cys62–Cys104 and Cys92–Cys156. A disordered region spans residues 168–225 (GQSPRGGAVPRKPVSEMPMERDRGAAHSLEPGKENLPGDPTSNATSRGAEGPLPPPSM). A compositionally biased stretch (basic and acidic residues) spans 185-200 (PMERDRGAAHSLEPGK). Residue Asn210 is glycosylated (N-linked (GlcNAc...) asparagine). The chain crosses the membrane as a helical span at residues 227-247 (AVAGAAGGLALLLLGVAGAGG). Residues 248–340 (AMCWRRRRAK…QSPPNIYYKV (93 aa)) lie on the Cytoplasmic side of the membrane. A disordered region spans residues 254–298 (RRAKPSESRHPGPGSFGRGGSLGLGGGGGMGPREAEPGELGIALR). Over residues 267–284 (GSFGRGGSLGLGGGGGMG) the composition is skewed to gly residues. Arg271 carries the omega-N-methylarginine modification. Residue Ser274 is modified to Phosphoserine. Residues 338–340 (YKV) carry the PDZ-binding motif.

This sequence belongs to the ephrin family. As to quaternary structure, interacts with GRIP1 and GRIP2. (Microbial infection) Interacts with nipah virus and hendra virus glycoprotein. In terms of tissue distribution, highly expressed in brain; expressed in embryonic floor plate, roof plate and hindbrain segments.

It is found in the membrane. In terms of biological role, cell surface transmembrane ligand for Eph receptors, a family of receptor tyrosine kinases which are crucial for migration, repulsion and adhesion during neuronal, vascular and epithelial development. Binds promiscuously Eph receptors residing on adjacent cells, leading to contact-dependent bidirectional signaling into neighboring cells. The signaling pathway downstream of the receptor is referred to as forward signaling while the signaling pathway downstream of the ephrin ligand is referred to as reverse signaling. May play a pivotal role in forebrain function. Binds to, and induce the collapse of, commissural axons/growth cones in vitro. May play a role in constraining the orientation of longitudinally projecting axons. (Microbial infection) Acts as a receptor for nipah virus and hendra virus. The chain is Ephrin-B3 (EFNB3) from Homo sapiens (Human).